Here is a 351-residue protein sequence, read N- to C-terminus: UDP-glucose 4-epimerase 5 (351 aa).

Residues 13–15 (GYI), 34–38 (DNLDN), 64–65 (DL), phenylalanine 86, and lysine 90 contribute to the NAD(+) site. 130-132 (SAT) provides a ligand contact to substrate. Tyrosine 154 acts as the Proton acceptor in catalysis. NAD(+) contacts are provided by lysine 158 and tyrosine 182. Substrate is bound by residues 182-184 (YFN), 203-205 (NNL), 221-223 (TVF), arginine 236, and 298-301 (RPGD).

The protein belongs to the NAD(P)-dependent epimerase/dehydratase family. In terms of assembly, forms homodimers and heterodimers. The cofactor is NAD(+). Widely expressed.

It catalyses the reaction UDP-alpha-D-glucose = UDP-alpha-D-galactose. It functions in the pathway carbohydrate metabolism; galactose metabolism. Enhanced activity by NaCl. Inhibited by UDP. In terms of biological role, catalyzes the interconversion between UDP-glucose and UDP-galactose. The chain is UDP-glucose 4-epimerase 5 from Arabidopsis thaliana (Mouse-ear cress).